The following is a 295-amino-acid chain: Protoheme IX farnesyltransferase (295 aa).

9 consecutive transmembrane segments (helical) span residues 8 to 28 (VTKP…FLLA), 35 to 55 (YTLF…GCVF), 84 to 104 (VSLV…WFGA), 107 to 127 (LACW…SLYM), 132 to 152 (VYGT…GYCA), 162 to 182 (LILL…IAIF), 208 to 228 (ITLY…GGYA), 233 to 253 (LVVA…GYKV), and 264 to 284 (FVFS…DFMV).

It belongs to the UbiA prenyltransferase family. Protoheme IX farnesyltransferase subfamily.

The protein localises to the cell inner membrane. It catalyses the reaction heme b + (2E,6E)-farnesyl diphosphate + H2O = Fe(II)-heme o + diphosphate. It participates in porphyrin-containing compound metabolism; heme O biosynthesis; heme O from protoheme: step 1/1. Converts heme B (protoheme IX) to heme O by substitution of the vinyl group on carbon 2 of heme B porphyrin ring with a hydroxyethyl farnesyl side group. The polypeptide is Protoheme IX farnesyltransferase (Enterobacter sp. (strain 638)).